A 334-amino-acid chain; its full sequence is Nucleoid-associated protein plu2870 (334 aa).

Belongs to the YejK family.

The protein resides in the cytoplasm. Its subcellular location is the nucleoid. This chain is Nucleoid-associated protein plu2870, found in Photorhabdus laumondii subsp. laumondii (strain DSM 15139 / CIP 105565 / TT01) (Photorhabdus luminescens subsp. laumondii).